Reading from the N-terminus, the 201-residue chain is Small ribosomal subunit protein uS4 (201 aa).

In terms of domain architecture, S4 RNA-binding spans 91-157; the sequence is SRLDNVVYRA…LPFQVARETV (67 aa).

It belongs to the universal ribosomal protein uS4 family. In terms of assembly, part of the 30S ribosomal subunit. Contacts protein S5. The interaction surface between S4 and S5 is involved in control of translational fidelity.

In terms of biological role, one of the primary rRNA binding proteins, it binds directly to 16S rRNA where it nucleates assembly of the body of the 30S subunit. Functionally, with S5 and S12 plays an important role in translational accuracy. This Rhodococcus erythropolis (strain PR4 / NBRC 100887) protein is Small ribosomal subunit protein uS4.